The chain runs to 118 residues: Large ribosomal subunit protein uL22 (118 aa).

The protein belongs to the universal ribosomal protein uL22 family. Part of the 50S ribosomal subunit.

Its function is as follows. This protein binds specifically to 23S rRNA; its binding is stimulated by other ribosomal proteins, e.g. L4, L17, and L20. It is important during the early stages of 50S assembly. It makes multiple contacts with different domains of the 23S rRNA in the assembled 50S subunit and ribosome. Functionally, the globular domain of the protein is located near the polypeptide exit tunnel on the outside of the subunit, while an extended beta-hairpin is found that lines the wall of the exit tunnel in the center of the 70S ribosome. The polypeptide is Large ribosomal subunit protein uL22 (Chlorobium limicola (strain DSM 245 / NBRC 103803 / 6330)).